Reading from the N-terminus, the 1946-residue chain is MRGPLGTEEELPRLFAEEMENEEEMSEEEDGGLEGFEDFFPAEPVSLPKKKPKKLKESKSSKGKRKKKEGSNDEMSDNEEDLEEKSESEGSDYSPTKKKKKKLKEKKEKKEKKEKRKKRGEDEDDNDDGGLKEPKSSGQLMAEWGLDDVDYLFSEDDYHTLTNYKAFSQFLRPLIAKKNPKIPMSKMMTVLGAKWREFSANNPFKGSSAAAAAAAVAAAVETVTIAPPLAISPQQVPQTLPIRKAKTKEGKGPGVRKKNKGAKDSKKKGRGKRVAGLKFRFGGISKRKKGSSSEEDEREDSDLDNASIHSSSVRSECSAALGKKNKRRRKKKRIDDGDGYETDHQDYCEVCQQGGEIILCDTCPRAYHLVCLDPELEKAPEGKWSCPHCEKEGIQWEPKDDDEEEEEGGCEEEEDDHMEFCRVCKDGGELLCCDACPSSYHLHCLNPPLPEIPNGEWLCPRCTCPPLKGKVQRILHWRWTEPPAPFVVGLPGPEVEPGMPPPRPLEGIPEREFFVKWAGLSYWHCSWVKELQLELYHTVMYRNYQRKNDMDEPPPFDYGSGDEDGKSEKRKNKDPLYAKMEERFYRYGIKPEWMMVHRILNHSFDKKGDIHYLIKWKDLPYDQCTWEIDEIDIPYYDNLKQAYWGHRELMLGEDARLPKRLVKKGKKLKDDKQEKPPDTPIVDPTVKFDKQPWYIDATGGTLHPYQLEGLNWLRFSWAQGTDTILADEMGLGKTVQTIVFLYSLYKEGHSKGPYLVSAPLSTIINWEREFEMWAPDFYVVTYTGDKESRSVIRENEFSFEDNAIRGGKKVFRMKKEVQIKFHVLLTSYELITIDQAILGSIEWACLVVDEAHRLKNNQSKFFRVLNSYKIDYKLLLTGTPLQNNLEELFHLLNFLTPERFNNLEGFLEEFADISKEDQIKKLHDLLGPHMLRRLKADVFKNMPAKTELIVRVELSQMQKKYYKFILTRNFEALNSKGGGNQVSLLNIMMDLKKCCNHPYLFPVAAVEAPVLPNGSYDGSSLVKSSGKLMLLQKMLKKLRDEGHRVLIFSQMTKMLDLLEDFLEYEGYKYERIDGGITGGLRQEAIDRFNAPGAQQFCFLLSTRAGGLGINLATADTVIIYDSDWNPHNDIQAFSRAHRIGQNKKVMIYRFVTRASVEERITQVAKRKMMLTHLVVRPGLGSKSGSMTKQELDDILKFGTEELFKDDVEGMMSQGQRPTTPIPDIQSTKGGSLTAGAKKKHGSTPPGDNKDVEDSSVIHYDDAAISKLLDRNQDATDDTELQNMNEYLSSFKVAQYVVREEDGVEEVEREVIKQEENVDPDYWEKLLRHHYEQQQEDLARNLGKGKRIRKQVNYNDASQEDQEWQDELSDNQSEYSIGSEDEDEDFEERPEGQSGRRQSRRQLKSDRDKPLPPLLARVGGNIEVLGFNARQRKAFLNAIMRWGMPPQDAFNSHWLVRDLRGKSEKEFRAYVSLFMRHLCEPGADGAETFADGVPREGLSRQHVLTRIGVMSLVRKKVQEFEHVNGKYSTPDLVPEGAEGKKPGEVISSDPNTPVPASPAQLPPAPLGLTDKMEAQLGYTDEKESGMQKPKKSLEIQTLPTALDRVEGEDKHQSSDSKDRAREERTEEVEKAQGSPEQPLKEEVLPDKEPIPDKPELSLGHSGDFRPDDPKTEEKEPGETQQNGDREEDEEGKKEDKNGKFKFMFNIADGGFTELHTLWQNEERAAVSSGKIYEIWHRRHDYWLLAGIVTHGYARWQDIQNDPRYMILNEPFKSEIHKGNYLEMKNKFLARRFKLLEQALVIEEQLRRAAYLNMTQDPNHPAMALNARLAEVECLAESHQHLSKESLAGNKPANAVLHKVLNQLEELLSDMKADVTRLPSMLSRIPPVAARLQMSERSILSRLTNRAGDPTIQQTSSRRRDFPLFQRSFPAEPSHLPNPRGREKLQPF.

Disordered stretches follow at residues M1–L140, V236–K272, and S285–Y340. 2 stretches are compositionally biased toward acidic residues: residues E17–E37 and N72–G90. 2 stretches are compositionally biased toward basic residues: residues T96–K118 and G254–K272. Acidic residues predominate over residues S293–L303. A compositionally biased stretch (basic residues) spans K323–K332. 2 PHD-type zinc fingers span residues Q345 to E392 and M418 to P465. The histone-binding stretch occupies residues Q345–A655. The Chromo 1 domain occupies M499 to F556. The disordered stretch occupies residues D551–K573. Positions E563–K573 are enriched in basic and acidic residues. The region spanning M594 to A655 is the Chromo 2 domain. Residues R714 to E898 enclose the Helicase ATP-binding domain. Residue D727–T734 participates in ATP binding. The short motif at D849–H852 is the DEAH box element. The Helicase C-terminal domain occupies L1030–L1195. 5 disordered regions span residues M1210–S1254, Y1353–L1413, K1525–G1566, D1579–N1696, and S1926–F1946. The segment covering S1212–G1230 has biased composition (polar residues). Composition is skewed to acidic residues over residues S1357–S1368 and S1378–E1387. Q1392 carries the post-translational modification N5-methylglutamine. The span at T1551–P1564 shows a compositional bias: pro residues. S1556 bears the Phosphoserine mark. Basic and acidic residues-rich tracts occupy residues D1602 to K1629, P1637 to E1654, and G1661 to G1676.

This sequence belongs to the SNF2/RAD54 helicase family. Component of the nucleosome remodeling and deacetylase (NuRD) repressor complex, composed of core proteins MTA1, MTA2, MTA3, RBBP4, RBBP7, HDAC1, HDAC2, MBD2, MBD3, and peripherally associated proteins CDK2AP1, CDK2AP2, GATAD2A, GATAD2B, CHD3, CHD4 and CHD5. The exact stoichiometry of the NuRD complex is unknown, and some subunits such as MBD2 and MBD3, GATAD2A and GATAD2B, and CHD3, CHD4 and CHD5 define mutually exclusive NuRD complexes. Interacts with HDAC2. In terms of processing, methylated at Gln-1392 by N6AMT1. Specifically expressed by neurons in brain, retina and adrenal gland (at protein level). Also detected in testis.

It localises to the nucleus. The protein resides in the chromosome. The enzyme catalyses ATP + H2O = ADP + phosphate + H(+). In terms of biological role, ATP-dependent chromatin-remodeling factor that binds DNA through histones and regulates gene transcription. May specifically recognize and bind trimethylated 'Lys-27' (H3K27me3) and non-methylated 'Lys-4' of histone H3. Acts as a component of the histone deacetylase NuRD complex which participates in the remodeling of chromatin. Plays a role in the development of the nervous system by activating the expression of genes promoting neuron terminal differentiation. In parallel, it may also positively regulate the trimethylation of histone H3 at 'Lys-27' thereby specifically repressing genes that promote the differentiation into non-neuronal cell lineages. Regulates the expression of genes involved in cell proliferation and differentiation. Downstream activated genes may include CDKN2A that positively regulates the p53/TP53 pathway, which in turn, prevents cell proliferation. In spermatogenesis, it probably regulates histone hyperacetylation and the replacement of histones by transition proteins in chromatin, a crucial step in the condensation of spermatid chromatin and the production of functional spermatozoa. The polypeptide is Chromodomain-helicase-DNA-binding protein 5 (Chd5) (Mus musculus (Mouse)).